Consider the following 163-residue polypeptide: UPF0134 protein MPN_139 (163 aa).

This sequence belongs to the UPF0134 family.

The sequence is that of UPF0134 protein MPN_139 from Mycoplasma pneumoniae (strain ATCC 29342 / M129 / Subtype 1) (Mycoplasmoides pneumoniae).